Reading from the N-terminus, the 341-residue chain is MKKMMIATLAAASVLLAVANQAXAGATLDAVQKKGFVQCGISDGLPGFSYADADGKFSGIDVDICRGVAAAVFGDDTKVKYTPLTAKERFTALQSGEVDLLSRNTTWTSSRDAGMGMAFTGVTYYDGIGFLTHDKAGLKSAKELDGATVCIQAGTDTELNVADYFKANNMKYTPVTFDRSDESAKALESGRCDTLASDQSQLYALRIKLSNPAEWIVLPEVISKEPLGPVVRRGDDEWFSIVRWTLFAMLNAEEMGINSQNVDEKAANPATPDMAHLLGKEGDYGKDLKLDNKWAYNIIKQVGNYSEIFERNVGSESPLKIKRGQNNLWNNGGIQYAPPVR.

The signal sequence occupies residues 1–19 (MKKMMIATLAAASVLLAVA).

It belongs to the bacterial solute-binding protein 3 family.

It is found in the periplasm. Functionally, probably part of the binding-protein-dependent transport system YdhWXYZ for an amino acid. In Escherichia coli (strain K12), this protein is Putative amino-acid ABC transporter-binding protein YhdW (yhdW).